We begin with the raw amino-acid sequence, 129 residues long: Ribulose bisphosphate carboxylase small subunit (129 aa).

Over residues 104–120 (ENEPSLRMTRTESDGRS) the composition is skewed to basic and acidic residues. The interval 104–129 (ENEPSLRMTRTESDGRSQHYTWETQR) is disordered.

It belongs to the RuBisCO small chain family. Heterohexadecamer of 8 large and 8 small subunits.

RuBisCO catalyzes two reactions: the carboxylation of D-ribulose 1,5-bisphosphate, the primary event in carbon dioxide fixation, as well as the oxidative fragmentation of the pentose substrate. Both reactions occur simultaneously and in competition at the same active site. Although the small subunit is not catalytic it is essential for maximal activity. The protein is Ribulose bisphosphate carboxylase small subunit of Sinorhizobium medicae (strain WSM419) (Ensifer medicae).